A 293-amino-acid polypeptide reads, in one-letter code: Ribosomal RNA small subunit methyltransferase H (293 aa).

S-adenosyl-L-methionine contacts are provided by residues 32–34, Asp51, Phe78, Asp99, and Gln106; that span reads GGH. The segment at 271–293 is disordered; it reads PGTEEIRENPPSRSAKLRVAKRI.

This sequence belongs to the methyltransferase superfamily. RsmH family.

It localises to the cytoplasm. It carries out the reaction cytidine(1402) in 16S rRNA + S-adenosyl-L-methionine = N(4)-methylcytidine(1402) in 16S rRNA + S-adenosyl-L-homocysteine + H(+). Its function is as follows. Specifically methylates the N4 position of cytidine in position 1402 (C1402) of 16S rRNA. This Persephonella marina (strain DSM 14350 / EX-H1) protein is Ribosomal RNA small subunit methyltransferase H.